A 504-amino-acid chain; its full sequence is Flavin-dependent halogenase armH3 (504 aa).

Positions 16, 19, 49, and 149 each coordinate FAD. Serine 329 and glycine 330 together coordinate chloride. Isoleucine 331 contributes to the FAD binding site. The segment at 444 to 475 (NNLRTPVDTGAADVKAKHAPSETDAQNPLQSM) is disordered.

This sequence belongs to the flavin-dependent halogenase family.

It carries out the reaction melleolide F + FADH2 + chloride + O2 = 6'-chloromelleolide F + FAD + 2 H2O + H(+). Flavin-dependent halogenase involved in the biosynthesis of melleolides, a range of antifungal and phytotoxic polyketide derivatives composed of an orsellinic acid (OA) moiety esterified to various sesquiterpene alcohols. The halogenase catalyzes the transfer of a single chlorine atom to the melleolide backbone, resulting in a 6'-chloromelleolide product. The enzyme acts on free substrate and does not depend on carrier-protein-dependent acceptor molecules. In Armillaria mellea (Honey mushroom), this protein is Flavin-dependent halogenase armH3.